Consider the following 381-residue polypeptide: Genome polyprotein (381 aa).

The interval 115–155 (ANDTIDTGGNSKKDVKPEQGSIQPSSNKGKEKDVNAGTSGT) is disordered.

The protein belongs to the potyviridae genome polyprotein family. Post-translationally, genome polyprotein of potyviruses undergoes post-translational proteolytic processing by the main proteinase NIa-pro resulting in the production of at least ten individual proteins. The P1 proteinase and the HC-pro cleave only their respective C-termini autocatalytically. 6K1 is essential for proper proteolytic separation of P3 from CI.

It is found in the virion. It catalyses the reaction RNA(n) + a ribonucleoside 5'-triphosphate = RNA(n+1) + diphosphate. Functionally, an RNA-dependent RNA polymerase that plays an essential role in the virus replication. In terms of biological role, involved in aphid transmission, cell-to-cell and systemis movement, encapsidation of the viral RNA and in the regulation of viral RNA amplification. In Capsicum annuum (Capsicum pepper), this protein is Genome polyprotein.